Reading from the N-terminus, the 176-residue chain is ATP-dependent protease subunit HslV (176 aa).

The active site involves Thr2. Residues Gly157, Cys160, and Thr163 each contribute to the Na(+) site.

Belongs to the peptidase T1B family. HslV subfamily. In terms of assembly, a double ring-shaped homohexamer of HslV is capped on each side by a ring-shaped HslU homohexamer. The assembly of the HslU/HslV complex is dependent on binding of ATP.

It is found in the cytoplasm. It catalyses the reaction ATP-dependent cleavage of peptide bonds with broad specificity.. Its activity is regulated as follows. Allosterically activated by HslU binding. In terms of biological role, protease subunit of a proteasome-like degradation complex believed to be a general protein degrading machinery. The sequence is that of ATP-dependent protease subunit HslV from Klebsiella pneumoniae (strain 342).